The primary structure comprises 318 residues: 1-aminocyclopropane-1-carboxylate oxidase 1 (318 aa).

Positions 153-254 constitute a Fe2OG dioxygenase domain; sequence PTFGTKVSNY…RMSIASFYNP (102 aa). 3 residues coordinate Fe cation: H177, D179, and H234.

The protein belongs to the iron/ascorbate-dependent oxidoreductase family. The cofactor is Fe cation. In terms of tissue distribution, fruit.

The enzyme catalyses 1-aminocyclopropane-1-carboxylate + L-ascorbate + O2 = ethene + L-dehydroascorbate + hydrogen cyanide + CO2 + 2 H2O. Its pathway is alkene biosynthesis; ethylene biosynthesis via S-adenosyl-L-methionine; ethylene from S-adenosyl-L-methionine: step 2/2. The protein is 1-aminocyclopropane-1-carboxylate oxidase 1 (ACO1) of Cucumis melo (Muskmelon).